A 543-amino-acid polypeptide reads, in one-letter code: CTP synthase (543 aa).

Positions 1–265 (MTRFVFITGG…DQEVLRYFDL (265 aa)) are amidoligase domain. S13 provides a ligand contact to CTP. S13 is a binding site for UTP. 14-19 (SLGKGI) is a binding site for ATP. L-glutamine is bound at residue Y54. An ATP-binding site is contributed by D71. Residues D71 and E139 each coordinate Mg(2+). Residues 146–148 (DIE), 186–191 (KTKPTQ), and K222 each bind CTP. Residues 186–191 (KTKPTQ) and K222 contribute to the UTP site. Residues 291 to 542 (RVAIVGKYTA…IAAAVKEAHR (252 aa)) enclose the Glutamine amidotransferase type-1 domain. An L-glutamine-binding site is contributed by G354. C381 (nucleophile; for glutamine hydrolysis) is an active-site residue. L-glutamine is bound by residues 382 to 385 (FGMQ), E405, and R470. Catalysis depends on residues H515 and E517.

The protein belongs to the CTP synthase family. As to quaternary structure, homotetramer.

The catalysed reaction is UTP + L-glutamine + ATP + H2O = CTP + L-glutamate + ADP + phosphate + 2 H(+). It catalyses the reaction L-glutamine + H2O = L-glutamate + NH4(+). The enzyme catalyses UTP + NH4(+) + ATP = CTP + ADP + phosphate + 2 H(+). It functions in the pathway pyrimidine metabolism; CTP biosynthesis via de novo pathway; CTP from UDP: step 2/2. Allosterically activated by GTP, when glutamine is the substrate; GTP has no effect on the reaction when ammonia is the substrate. The allosteric effector GTP functions by stabilizing the protein conformation that binds the tetrahedral intermediate(s) formed during glutamine hydrolysis. Inhibited by the product CTP, via allosteric rather than competitive inhibition. Its function is as follows. Catalyzes the ATP-dependent amination of UTP to CTP with either L-glutamine or ammonia as the source of nitrogen. Regulates intracellular CTP levels through interactions with the four ribonucleotide triphosphates. The polypeptide is CTP synthase (Gluconobacter oxydans (strain 621H) (Gluconobacter suboxydans)).